A 678-amino-acid chain; its full sequence is DNA mismatch repair protein MutL (678 aa).

It belongs to the DNA mismatch repair MutL/HexB family.

This protein is involved in the repair of mismatches in DNA. It is required for dam-dependent methyl-directed DNA mismatch repair. May act as a 'molecular matchmaker', a protein that promotes the formation of a stable complex between two or more DNA-binding proteins in an ATP-dependent manner without itself being part of a final effector complex. The protein is DNA mismatch repair protein MutL of Lactiplantibacillus plantarum (strain ATCC BAA-793 / NCIMB 8826 / WCFS1) (Lactobacillus plantarum).